The chain runs to 218 residues: Thyroid hormone receptor alpha (218 aa).

Positions 1-215 constitute an NR LBD domain; it reads PEDIGQSPGV…PPLFLEVFED (215 aa). Residues R36 and S85 each contribute to the 3,3',5-triiodo-L-thyronine site.

It belongs to the nuclear hormone receptor family. NR1 subfamily.

The protein localises to the nucleus. Its function is as follows. Nuclear hormone receptor that can act as a repressor or activator of transcription. High affinity receptor for thyroid hormones, including triiodothyronine and thyroxine. The sequence is that of Thyroid hormone receptor alpha (thra) from Oncorhynchus mykiss (Rainbow trout).